The chain runs to 429 residues: Threonine synthase (429 aa).

The residue at position 107 (Lys107) is an N6-(pyridoxal phosphate)lysine.

Belongs to the threonine synthase family. Requires pyridoxal 5'-phosphate as cofactor.

The enzyme catalyses O-phospho-L-homoserine + H2O = L-threonine + phosphate. The protein operates within amino-acid biosynthesis; L-threonine biosynthesis; L-threonine from L-aspartate: step 5/5. In terms of biological role, catalyzes the gamma-elimination of phosphate from L-phosphohomoserine and the beta-addition of water to produce L-threonine. The polypeptide is Threonine synthase (thrC) (Serratia marcescens).